The following is a 282-amino-acid chain: MTDRLSQLIQAVEEADSSKLLLEAVQNLAAARLEGAIPILIEALSYNNPGAAVASVDGLILLGSAAVPPLLELLDMHNYTARAWAIRALAGIGDPRGLVTLLGVATADFAMSVRRAAVKGLGTMKWHWFPDELREIAQEEALDALLFVAQQDEEWVVRYASVVGLQSLAIAIAEAHPTWLAEIQTQFNLMSCNDEVLAIRGRVCVAQQKLQQKIQQLKSDSFHKSIEIKETEEKKSPLTSNDWQDILNQLYEIKRQERINSGSEGDPRRFQQLAAAITETNN.

This sequence belongs to the CpcE/RpcE/PecE family. In terms of assembly, cpcE and CpcF associate to form a lyase.

Its function is as follows. Required for the chromophorylation of the CpcA gene product. The sequence is that of Phycocyanobilin lyase subunit beta (cpcF1) from Pseudanabaena tenuis (strain PCC 7409).